Reading from the N-terminus, the 446-residue chain is tRNA-2-methylthio-N(6)-dimethylallyladenosine synthase (446 aa).

The region spanning 3 to 119 (KKIFIKTFGC…INEAILNHLK (117 aa)) is the MTTase N-terminal domain. 6 residues coordinate [4Fe-4S] cluster: cysteine 12, cysteine 48, cysteine 82, cysteine 158, cysteine 162, and cysteine 165. The 231-residue stretch at 144-374 (KDSKVSSFLT…QEKLFNNQIK (231 aa)) folds into the Radical SAM core domain. The TRAM domain maps to 377–439 (KSLENKILNV…QNSLFGKLTE (63 aa)).

Belongs to the methylthiotransferase family. MiaB subfamily. In terms of assembly, monomer. [4Fe-4S] cluster is required as a cofactor.

It is found in the cytoplasm. It catalyses the reaction N(6)-dimethylallyladenosine(37) in tRNA + (sulfur carrier)-SH + AH2 + 2 S-adenosyl-L-methionine = 2-methylsulfanyl-N(6)-dimethylallyladenosine(37) in tRNA + (sulfur carrier)-H + 5'-deoxyadenosine + L-methionine + A + S-adenosyl-L-homocysteine + 2 H(+). Its function is as follows. Catalyzes the methylthiolation of N6-(dimethylallyl)adenosine (i(6)A), leading to the formation of 2-methylthio-N6-(dimethylallyl)adenosine (ms(2)i(6)A) at position 37 in tRNAs that read codons beginning with uridine. This Pelagibacter ubique (strain HTCC1062) protein is tRNA-2-methylthio-N(6)-dimethylallyladenosine synthase.